The primary structure comprises 224 residues: Ribose-5-phosphate isomerase A (224 aa).

Substrate contacts are provided by residues 26–29 (TGST), 81–84 (DGAD), and 94–97 (KGGG). The active-site Proton acceptor is the Glu-103. Lys-121 serves as a coordination point for substrate.

Belongs to the ribose 5-phosphate isomerase family. As to quaternary structure, homodimer.

It catalyses the reaction aldehydo-D-ribose 5-phosphate = D-ribulose 5-phosphate. Its pathway is carbohydrate degradation; pentose phosphate pathway; D-ribose 5-phosphate from D-ribulose 5-phosphate (non-oxidative stage): step 1/1. Catalyzes the reversible conversion of ribose-5-phosphate to ribulose 5-phosphate. The protein is Ribose-5-phosphate isomerase A of Listeria monocytogenes serotype 4b (strain CLIP80459).